Consider the following 331-residue polypeptide: uncharacterized protein (331 aa).

7 Pentapeptide repeat domains span residues 20 to 59 (LKLP…NLGQ), 60 to 99 (ANLV…ILRD), 100 to 139 (SDMT…NMRQ), 151 to 190 (AILG…DLRK), 191 to 230 (ADLS…KISE), 231 to 270 (AEMT…DLSR), and 271 to 310 (ANLT…DLMS).

This is an uncharacterized protein from Synechocystis sp. (strain ATCC 27184 / PCC 6803 / Kazusa).